A 212-amino-acid polypeptide reads, in one-letter code: Cytidylate kinase (212 aa).

7–15 provides a ligand contact to ATP; sequence GPAASGKGT.

Belongs to the cytidylate kinase family. Type 1 subfamily.

The protein localises to the cytoplasm. It carries out the reaction CMP + ATP = CDP + ADP. It catalyses the reaction dCMP + ATP = dCDP + ADP. In Bradyrhizobium diazoefficiens (strain JCM 10833 / BCRC 13528 / IAM 13628 / NBRC 14792 / USDA 110), this protein is Cytidylate kinase.